The chain runs to 502 residues: Vicilin Jug r 6.0101 (502 aa).

The signal sequence occupies residues 1-27 (MAFKPKIPIALLLLTSLLAICAGLALA). Positions 67-84 (ARERAERRRSEEGSSREE) are enriched in basic and acidic residues. The interval 67 to 100 (ARERAERRRSEEGSSREEGYEEEELGGEREEENP) is disordered. Residues 85-100 (GYEEEELGGEREEENP) show a composition bias toward acidic residues. Cupin type-1 domains follow at residues 101–259 (YVFE…DQLE) and 302–475 (FNLF…REVE). A glycan (N-linked (GlcNAc...) asparagine) is linked at Asn340. The tract at residues 374–401 (HLSSSGSRGQREGSGSSRRRSRSGPSYQ) is disordered. The segment covering 376-389 (SSSGSRGQREGSGS) has biased composition (low complexity).

Belongs to the 7S seed storage protein family. Homotrimer. N-glycosylated; paucimannose-type structures containing xylose. Expressed in seed (at protein level).

In terms of biological role, seed storage protein. This chain is Vicilin Jug r 6.0101, found in Juglans regia (English walnut).